The sequence spans 482 residues: tRNA sulfurtransferase (482 aa).

One can recognise a THUMP domain in the interval 61–165; sequence LAIRDALTRI…DDRLLLIKGR (105 aa). ATP-binding positions include 183-184, K265, G287, and Q296; that span reads LI. Cysteines 344 and 456 form a disulfide. A Rhodanese domain is found at 404–482; it reads FGANDVILDI…GFANVKVYRP (79 aa). Catalysis depends on C456, which acts as the Cysteine persulfide intermediate.

The protein belongs to the ThiI family.

It is found in the cytoplasm. The catalysed reaction is [ThiI sulfur-carrier protein]-S-sulfanyl-L-cysteine + a uridine in tRNA + 2 reduced [2Fe-2S]-[ferredoxin] + ATP + H(+) = [ThiI sulfur-carrier protein]-L-cysteine + a 4-thiouridine in tRNA + 2 oxidized [2Fe-2S]-[ferredoxin] + AMP + diphosphate. It catalyses the reaction [ThiS sulfur-carrier protein]-C-terminal Gly-Gly-AMP + S-sulfanyl-L-cysteinyl-[cysteine desulfurase] + AH2 = [ThiS sulfur-carrier protein]-C-terminal-Gly-aminoethanethioate + L-cysteinyl-[cysteine desulfurase] + A + AMP + 2 H(+). It participates in cofactor biosynthesis; thiamine diphosphate biosynthesis. Its function is as follows. Catalyzes the ATP-dependent transfer of a sulfur to tRNA to produce 4-thiouridine in position 8 of tRNAs, which functions as a near-UV photosensor. Also catalyzes the transfer of sulfur to the sulfur carrier protein ThiS, forming ThiS-thiocarboxylate. This is a step in the synthesis of thiazole, in the thiamine biosynthesis pathway. The sulfur is donated as persulfide by IscS. This is tRNA sulfurtransferase from Salmonella arizonae (strain ATCC BAA-731 / CDC346-86 / RSK2980).